A 334-amino-acid polypeptide reads, in one-letter code: Holliday junction branch migration complex subunit RuvB (334 aa).

The tract at residues 4–184 (ADRLVSAGVI…FGIVQRLEFY (181 aa)) is large ATPase domain (RuvB-L). ATP-binding positions include I23, R24, G65, K68, T69, T70, 131–133 (EDY), R174, Y184, and R221. A Mg(2+)-binding site is contributed by T69. Residues 185–255 (RVEDLQHIVG…VASRALDMLS (71 aa)) are small ATPAse domain (RuvB-S). The tract at residues 258–334 (SEGFDYMDRK…YKHFGITREG (77 aa)) is head domain (RuvB-H). R294, R313, and R318 together coordinate DNA.

The protein belongs to the RuvB family. Homohexamer. Forms an RuvA(8)-RuvB(12)-Holliday junction (HJ) complex. HJ DNA is sandwiched between 2 RuvA tetramers; dsDNA enters through RuvA and exits via RuvB. An RuvB hexamer assembles on each DNA strand where it exits the tetramer. Each RuvB hexamer is contacted by two RuvA subunits (via domain III) on 2 adjacent RuvB subunits; this complex drives branch migration. In the full resolvosome a probable DNA-RuvA(4)-RuvB(12)-RuvC(2) complex forms which resolves the HJ.

It is found in the cytoplasm. The enzyme catalyses ATP + H2O = ADP + phosphate + H(+). Its function is as follows. The RuvA-RuvB-RuvC complex processes Holliday junction (HJ) DNA during genetic recombination and DNA repair, while the RuvA-RuvB complex plays an important role in the rescue of blocked DNA replication forks via replication fork reversal (RFR). RuvA specifically binds to HJ cruciform DNA, conferring on it an open structure. The RuvB hexamer acts as an ATP-dependent pump, pulling dsDNA into and through the RuvAB complex. RuvB forms 2 homohexamers on either side of HJ DNA bound by 1 or 2 RuvA tetramers; 4 subunits per hexamer contact DNA at a time. Coordinated motions by a converter formed by DNA-disengaged RuvB subunits stimulates ATP hydrolysis and nucleotide exchange. Immobilization of the converter enables RuvB to convert the ATP-contained energy into a lever motion, pulling 2 nucleotides of DNA out of the RuvA tetramer per ATP hydrolyzed, thus driving DNA branch migration. The RuvB motors rotate together with the DNA substrate, which together with the progressing nucleotide cycle form the mechanistic basis for DNA recombination by continuous HJ branch migration. Branch migration allows RuvC to scan DNA until it finds its consensus sequence, where it cleaves and resolves cruciform DNA. The polypeptide is Holliday junction branch migration complex subunit RuvB (Erwinia tasmaniensis (strain DSM 17950 / CFBP 7177 / CIP 109463 / NCPPB 4357 / Et1/99)).